We begin with the raw amino-acid sequence, 500 residues long: Galactose/methyl galactoside import ATP-binding protein MglA (500 aa).

ABC transporter domains are found at residues 8–243 (LEME…VGRD) and 257–500 (EMIL…AKYL). 40-47 (GENGAGKS) is a binding site for ATP.

This sequence belongs to the ABC transporter superfamily. Galactose/methyl galactoside importer (TC 3.A.1.2.3) family. In terms of assembly, the complex is composed of one ATP-binding protein (MglA), two transmembrane proteins (MglC) and a solute-binding protein (MglB).

The protein localises to the cell inner membrane. The enzyme catalyses D-galactose(out) + ATP + H2O = D-galactose(in) + ADP + phosphate + H(+). It carries out the reaction methyl beta-D-galactoside(out) + ATP + H2O = methyl beta-D-galactoside(in) + ADP + phosphate + H(+). Part of the ABC transporter complex MglABC involved in galactose/methyl galactoside import. Responsible for energy coupling to the transport system. The sequence is that of Galactose/methyl galactoside import ATP-binding protein MglA from Fusobacterium nucleatum subsp. nucleatum (strain ATCC 25586 / DSM 15643 / BCRC 10681 / CIP 101130 / JCM 8532 / KCTC 2640 / LMG 13131 / VPI 4355).